We begin with the raw amino-acid sequence, 666 residues long: Frizzled-3 (666 aa).

A signal peptide spans 1 to 22 (MAVSWIVFDLWLLTVFLGQIGG). An FZ domain is found at 23 to 136 (HSLFSCEPIT…CSRFPDCDEP (114 aa)). Residues 23–205 (HSLFSCEPIT…REELSFARYF (183 aa)) are Extracellular-facing. Disulfide bonds link Cys-28–Cys-89, Cys-36–Cys-82, Cys-73–Cys-110, Cys-99–Cys-133, and Cys-103–Cys-127. N-linked (GlcNAc...) asparagine glycosylation occurs at Asn-42. A helical membrane pass occupies residues 206 to 226 (IGLISIICLSATLFTFLTFLI). The Cytoplasmic portion of the chain corresponds to 227–237 (DVTRFRYPERP). Residues 238 to 258 (IIFYAVCYMMVSLIFFIGFLL) traverse the membrane as a helical segment. The Extracellular segment spans residues 259–288 (EDRVACNASSPAQYKASTVTQGSHNKACTM). Asn-265 is a glycosylation site (N-linked (GlcNAc...) asparagine). A helical transmembrane segment spans residues 289–309 (LFMVLYFFTMAGSVWWVILTI). The Cytoplasmic segment spans residues 310 to 328 (TWFLAAVPKWGSEAIEKKA). Residues 329–349 (LLFHASAWGIPGTLTIILLAM) traverse the membrane as a helical segment. Over 350-374 (NKIEGDNISGVCFVGLYDVDALRYF) the chain is Extracellular. N-linked (GlcNAc...) asparagine glycosylation occurs at Asn-356. Residues 375–395 (VLAPLCLYVVVGVSLLLAGII) traverse the membrane as a helical segment. Residues 396–420 (SLNRVRIEIPLEKENQDKLVKFMIR) are Cytoplasmic-facing. Residues 421 to 441 (IGVFSILYLVPLLVVIGCYFY) form a helical membrane-spanning segment. The Extracellular portion of the chain corresponds to 442-477 (EQAYRGIWETTWIQERCREYHIPCPYQVTQMSRPDL). Residues 478–498 (ILFLMKYLMALIVGIPSIFWV) traverse the membrane as a helical segment. The Cytoplasmic segment spans residues 499 to 666 (GSKKTCFEWA…RVIEEDGTSA (168 aa)). The Lys-Thr-X-X-X-Trp motif, mediates interaction with the PDZ domain of Dvl family members signature appears at 502–507 (KTCFEW). Positions 538–666 (RDPNTPIIRK…RVIEEDGTSA (129 aa)) are disordered. Over residues 550 to 565 (GTSTQGTSTHASSTQL) the composition is skewed to polar residues. Residues 617–638 (LTDHSRHSSSHRLNEQSRHSSI) are compositionally biased toward basic and acidic residues. Residues 639 to 656 (RDLSNNPMTHITHGTSMN) show a composition bias toward polar residues.

Belongs to the G-protein coupled receptor Fz/Smo family. As to quaternary structure, interacts with VANGL2. In terms of processing, ubiquitinated by ZNRF3, leading to its degradation by the proteasome. As to expression, expressed in the cortex, diencephalon, rostral brainstem and little or no staining is seen in the striatum or cerebellum. Expressed in both hair cells and supporting cells in the utricle, saccule, cristae and the organ of Corti in the inner ear (at protein level). Highly expressed in the CNS. In skin, it is restricted to the epidermis and to the developing hair follicle.

The protein localises to the membrane. The protein resides in the cell membrane. It is found in the cell surface. It localises to the apical cell membrane. Its function is as follows. Receptor for Wnt proteins. Most of frizzled receptors are coupled to the beta-catenin canonical signaling pathway, which leads to the activation of disheveled proteins, inhibition of GSK-3 kinase, nuclear accumulation of beta-catenin and activation of Wnt target genes. A second signaling pathway involving PKC and calcium fluxes has been seen for some family members, but it is not yet clear if it represents a distinct pathway or if it can be integrated in the canonical pathway, as PKC seems to be required for Wnt-mediated inactivation of GSK-3 kinase. Both pathways seem to involve interactions with G-proteins. Activation by Wnt5A stimulates PKC activity via a G-protein-dependent mechanism. Involved in transduction and intercellular transmission of polarity information during tissue morphogenesis and/or in differentiated tissues. Plays a role in controlling early axon growth and guidance processes necessary for the formation of a subset of central and peripheral major fiber tracts. Required for the development of major fiber tracts in the central nervous system, including: the anterior commissure, the corpus callosum, the thalamocortical, corticothalamic and nigrostriatal tracts, the corticospinal tract, the fasciculus retroflexus, the mammillothalamic tract, the medial lemniscus, and ascending fiber tracts from the spinal cord to the brain. In the peripheral nervous system, controls axon growth in distinct populations of cranial and spinal motor neurons, including the facial branchimotor nerve, the hypoglossal nerve, the phrenic nerve, and motor nerves innervating dorsal limbs. Involved in the migration of cranial neural crest cells. May also be implicated in the transmission of sensory information from the trunk and limbs to the brain. Controls commissural sensory axons guidance after midline crossing along the anterior-posterior axis in the developing spinal cord in a Wnt-dependent signaling pathway. Together with FZD6, is involved in the neural tube closure and plays a role in the regulation of the establishment of planar cell polarity (PCP), particularly in the orientation of asymmetric bundles of stereocilia on the apical faces of a subset of auditory and vestibular sensory cells located in the inner ear. Promotes neurogenesis by maintaining sympathetic neuroblasts within the cell cycle in a beta-catenin-dependent manner. The sequence is that of Frizzled-3 (Fzd3) from Mus musculus (Mouse).